Consider the following 303-residue polypeptide: Ribonuclease HIII (303 aa).

In terms of domain architecture, RNase H type-2 spans W89–L303. Residues D95, E96, and D199 each coordinate a divalent metal cation.

The protein belongs to the RNase HII family. RnhC subfamily. It depends on Mn(2+) as a cofactor. The cofactor is Mg(2+).

It is found in the cytoplasm. It carries out the reaction Endonucleolytic cleavage to 5'-phosphomonoester.. Functionally, endonuclease that specifically degrades the RNA of RNA-DNA hybrids. This is Ribonuclease HIII from Leuconostoc mesenteroides subsp. mesenteroides (strain ATCC 8293 / DSM 20343 / BCRC 11652 / CCM 1803 / JCM 6124 / NCDO 523 / NBRC 100496 / NCIMB 8023 / NCTC 12954 / NRRL B-1118 / 37Y).